Here is a 552-residue protein sequence, read N- to C-terminus: MSVTFKDDVHRILKFVANCNGRFEDSKCDIRESPLGGLGVFAKTDIAEGESILTLNKSSIFSASNSSIANLLCDSSIDGMLALNIAFIYETTVFRNSSHWYPFLRTIRIRDDEGHLNLPPSFWHADAKRLLKGTSFDTLFDSLAPEEEIMEGFEIAVDLAHKWNDEFGLEIPKGFLDVSEENHEEDYNLKLEKFISVAYTLSSRGFEIDAYHETALVPIADLFNHHVSDPDLKFVSLYDVCDKCGEPDMCKHLIAEEYLEAENLDKNMPKVASMETRVIDEDLIKSLENDLEKEYSNVTANIEDDDGGIENPDECVDLVLKNDVAQGQEIFNSYGELSNVFLLARYGFTVPENQYDIVHLGPDFMKILKKEEKYQEKVKWWSQVGHGLFSAWYAQMRQEDEEDEDGQAKSDNLSDDIESEEEEEEEEGDDSLESWLSQLYIDSSGEPSPSTWALANLLTLTAVQWESLFSKKATPHISDSIVNEEKLPFLAKKDNPHSKKLLSNLLKEKQLPCIKGDNSSKITSATKSMLQNARTLVQSEHNILDRCLKRLS.

The SET domain maps to 26-335; the sequence is SKCDIRESPL…QGQEIFNSYG (310 aa). Y334 contributes to the S-adenosyl-L-methionine binding site. The segment at 399 to 432 is disordered; it reads EDEEDEDGQAKSDNLSDDIESEEEEEEEEGDDSL. Residues 413–432 are compositionally biased toward acidic residues; sequence LSDDIESEEEEEEEEGDDSL.

Belongs to the class V-like SAM-binding methyltransferase superfamily.

It is found in the nucleus. Its function is as follows. S-adenosyl-L-methionine-dependent protein-lysine N-methyltransferase that monomethylates 60S ribosomal protein L42 (RPL42A and RPL42B) at 'Lys-40'. The protein is Ribosomal lysine N-methyltransferase 3 of Saccharomyces cerevisiae (strain ATCC 204508 / S288c) (Baker's yeast).